The sequence spans 403 residues: Tyrosine--tRNA ligase (403 aa).

The short motif at 43 to 52 (PTAPDLHLGH) is the 'HIGH' region element. The 'KMSKS' region motif lies at 227–231 (KMSKS). Lys230 lines the ATP pocket. In terms of domain architecture, S4 RNA-binding spans 338–399 (LPIAQLLKQT…GKRKFARVTI (62 aa)).

This sequence belongs to the class-I aminoacyl-tRNA synthetase family. TyrS type 2 subfamily. Homodimer.

The protein resides in the cytoplasm. The catalysed reaction is tRNA(Tyr) + L-tyrosine + ATP = L-tyrosyl-tRNA(Tyr) + AMP + diphosphate + H(+). Catalyzes the attachment of tyrosine to tRNA(Tyr) in a two-step reaction: tyrosine is first activated by ATP to form Tyr-AMP and then transferred to the acceptor end of tRNA(Tyr). The protein is Tyrosine--tRNA ligase of Nitrosospira multiformis (strain ATCC 25196 / NCIMB 11849 / C 71).